The primary structure comprises 159 residues: Ribosomal RNA large subunit methyltransferase H (159 aa).

Residues Ile-75, Gly-108, and 127 to 132 (FGRMTL) contribute to the S-adenosyl-L-methionine site.

The protein belongs to the RNA methyltransferase RlmH family. Homodimer.

Its subcellular location is the cytoplasm. It catalyses the reaction pseudouridine(1915) in 23S rRNA + S-adenosyl-L-methionine = N(3)-methylpseudouridine(1915) in 23S rRNA + S-adenosyl-L-homocysteine + H(+). Functionally, specifically methylates the pseudouridine at position 1915 (m3Psi1915) in 23S rRNA. This chain is Ribosomal RNA large subunit methyltransferase H, found in Lactococcus lactis subsp. lactis (strain IL1403) (Streptococcus lactis).